A 143-amino-acid chain; its full sequence is Transcriptional regulator MraZ (143 aa).

SpoVT-AbrB domains follow at residues 5 to 47 (THSP…SQKE) and 76 to 119 (ASDE…DADA).

The protein belongs to the MraZ family. In terms of assembly, forms oligomers.

The protein localises to the cytoplasm. The protein resides in the nucleoid. The chain is Transcriptional regulator MraZ from Paenarthrobacter aurescens (strain TC1).